Consider the following 483-residue polypeptide: MORN repeat-containing protein 1 (483 aa).

At S18 the chain carries Phosphoserine. MORN repeat units lie at residues 39–61, 62–84, 86–108, 109–131, 132–154, 155–177, and 178–200; these read YEGEWKGGKKHGHGKLLFKDGSY, YEGEFVNGEITGEGYQHWAWSGN, YSGQFVLGEPQGHGIMKYKAGGH, YEGELSQGLREGQGFLEDQDGQV, YQGSFHDNKRHGRGQMVFKNGDK, YEGDWVRDQRQGHGVLFCADGST, and YKGQWHNDVFSGLGSLVHCSGVT. The disordered stretch occupies residues 392 to 427; sequence EKAGNRPKGDRSPPEVLSTAQEPLRGTNRSDGTTAE. Residues 394–404 show a composition bias toward basic and acidic residues; the sequence is AGNRPKGDRSP. Position 403 is a phosphoserine (S403). A compositionally biased stretch (polar residues) spans 418-427; sequence TNRSDGTTAE.

In Rattus norvegicus (Rat), this protein is MORN repeat-containing protein 1 (Morn1).